We begin with the raw amino-acid sequence, 199 residues long: Translation machinery-associated protein 22 (199 aa).

One can recognise an SUI1 domain in the interval 97 to 168; it reads VVIRREARTK…EVEAYIHALL (72 aa).

The protein belongs to the DENR family. In terms of assembly, interacts with the 40S ribosomal subunit.

It localises to the cytoplasm. This Eremothecium gossypii (strain ATCC 10895 / CBS 109.51 / FGSC 9923 / NRRL Y-1056) (Yeast) protein is Translation machinery-associated protein 22 (TMA22).